A 360-amino-acid chain; its full sequence is MSLSRLHIESFRNISSAQLQPGDGLNLIYGHNGSGKTSILEAIYFLGMGRSFRSHLSQRVIKNDDDALTLFANMESGDEQSKIGLRRFRSGDIEVKINGDKVKRLSTLAETLPIQVITPESFSLLFEGPKSRRQFIDWGAFHSDPRFYAAWVNVRRILKQRNQLLRDGSPYSSIQFWDKEFIRYAELVTDIRKQYVDSLNELLKGIIGEFLPQVDVKVSFTRGWDAKTEYAQLLETQYPRDLATGYTVSGPHKADLRLRVGTLPAQDALSRGQLKLLVCALRIAQGKLLKQQIDKKSIYLVDDLPSELDAKHRKLLLQQLADTGAQVFVTAIEPAAIVDSLITPPSKMFHVEQGRVTVIE.

30 to 37 (GHNGSGKT) lines the ATP pocket.

The protein belongs to the RecF family.

Its subcellular location is the cytoplasm. Functionally, the RecF protein is involved in DNA metabolism; it is required for DNA replication and normal SOS inducibility. RecF binds preferentially to single-stranded, linear DNA. It also seems to bind ATP. The chain is DNA replication and repair protein RecF from Shewanella pealeana (strain ATCC 700345 / ANG-SQ1).